Consider the following 606-residue polypeptide: DNA mismatch repair protein MutL (606 aa).

Residues 377–401 (HRPLFAPQPAPQPDREPPLPDSGSR) are disordered.

Belongs to the DNA mismatch repair MutL/HexB family.

This protein is involved in the repair of mismatches in DNA. It is required for dam-dependent methyl-directed DNA mismatch repair. May act as a 'molecular matchmaker', a protein that promotes the formation of a stable complex between two or more DNA-binding proteins in an ATP-dependent manner without itself being part of a final effector complex. This chain is DNA mismatch repair protein MutL, found in Geobacter sulfurreducens (strain ATCC 51573 / DSM 12127 / PCA).